Reading from the N-terminus, the 74-residue chain is DNA-directed RNA polymerase subunit omega (74 aa).

Belongs to the RNA polymerase subunit omega family. The RNAP catalytic core consists of 2 alpha, 1 beta, 1 beta' and 1 omega subunit. When a sigma factor is associated with the core the holoenzyme is formed, which can initiate transcription.

The catalysed reaction is RNA(n) + a ribonucleoside 5'-triphosphate = RNA(n+1) + diphosphate. Functionally, promotes RNA polymerase assembly. Latches the N- and C-terminal regions of the beta' subunit thereby facilitating its interaction with the beta and alpha subunits. The polypeptide is DNA-directed RNA polymerase subunit omega (Helicobacter acinonychis (strain Sheeba)).